The following is a 130-amino-acid chain: Small ribosomal subunit protein uS9 (130 aa).

Belongs to the universal ribosomal protein uS9 family.

In Streptococcus suis (strain 98HAH33), this protein is Small ribosomal subunit protein uS9.